The sequence spans 2664 residues: MAENSGRGYQTPVHRDVFFSKSAPQSGNTADDIPNAASQPDTTSTMAMPSAKTLLLFGPGAMSLDQTYFSRILSFVKDDAASQWAVRAIEDIESGWDALSESIPKLQQTPGADHARRLAEWLRTGVITPRTTVANLPNAILGPLVIIAQLVEYLQYVESSQSANGDGKLFQLPSTAQTETVGCCLGVFSALVVSSSSSWAKFHHNAAAVLRKVFVLGALSDAQDISDVTGSSVSLIAFWRGGQSLSDLKKVLEICPGAYISVLYDDNRATVTTPSRIASDLKGHLSRAGFTASETEFHGRFHAGELYNNDLEALFSFCRKDPLFQLPDASSLILRTRVNSEKILADNDSLLEVASRAFLVEQFNWVKTFRSAVSSSLQDRTSKVIEFGPERCVPPTLLRRLNSQVTHYEFQSTGQRHSNPDMPSGCIDNDIAVIGMSCQVAGAQDLEQYWNILLEGRSQHKNLVPNERFAMETVFRPGQDGEDRKWYGNFIDDYDAFDYKFFRKSPREVLHMDPQQRLILQTAYQAVAQSGYYHRPGADRRIGCYIGCVANDYENNISHTSPTAFSATGALRSYIAGKVSHYFGWTGPGMMLDTACSASTVAIDLACRAILSGDCSAALAGGTNFYSTPMFFQNLAAGSFLSPTGQCKPFDAKADGYCRGEAIGAVFLKKLSNAIADGDQILGVISATAINQNQNDTPIFVPNPSSLTNVFQNVVGKAGLEVNDISVVEAHGTGTPVGDPAEYDSIRQVFGGSVRAGLKPLQLGSVKGLIGHTEGASGVVALIKMLLMMQESRIPPQASFTSMSASIKASPADNMEITKAALPWEDESKVALINNYGAAGSNASMVIKQAPKYPSGSEAVGHGSADLTSPTSTFRCPFYISGLDDKAIRAYATRLRQFIKNKVISRDVLGIENLSFNVNRQSNWSLSRGFVFGAESITELEEKLASFETFAVPSVRPVILCFGGQVSKSVGLDRGVFDKATVLRKYLDRCDSVCKSIGAGSIYPGIFQSEPILDPAVLQPLLLSMQYSCALSWIDCGVEPAALVGHSFGELTALCVSGILSLEDALKLVHGRSKIIKESWGPEKGSMIAVEADRNDVEKLLVASNARLGETERAGHATIACFNGPKSFTIAGSAAAIDAVQQTVSTLDIPIKHKRLDVTNAFHSTLVEHLRPQLEALGRSLSFGNAHIPLERATEQRETGPISPAYVAEHMRNPVYFDHAVQRLASQYPEAIWLEAGSNSTITTMTGRALGMPKGSTFQPVSVTGTTQGTRQLADVTMSLWNAGLPCSFWPHSRAQTYGYAPIMLPPYQFEKYRHWLEFKPPPKPVVIERLVYENGGVDQEAPAPGLYTFMGYGDKTETDCRFRINTTTKSYVDIVSGYTLGKTVQACPPIFGIDTAIQAITSVRLEVIAANELHPHIYNVLNHLPLVMDPTRAVFLEFERSGHAPEGWKFKLTSEADDSSKTVHLSGQLEFHRADDARSNFEFSRLERLVTHERCLRALESADDADEVIQGQSIYKVYSDLVSYAPKFRGLQRLVGRPSESAGRAVKRRSRDSWLDFALGETFSQVGSIWVNCLAPGRNTADDTVYIADGIEQWMRSPSLLRKISEGSYADHQSEWQILATHKRTEGDTFITDIFVFDSASRLLDEALLGVKFSARSMSELFTNVVIAAPPVPFPATIAPISSAPTENQYSSMTTSPPARAQVQKRNTKTELWAKLLPVLADISGLEPEEINETDALADIGIDSLMGMEMAREVETTFNCTLEQSELMSIFDVPGILAFLQSTLGLEGEDDASQSSDAASSSRNTPPSSNDGILATPSPKLEEEDISRSYIDLGNEVGLPAFAVIEAFRAANEQTDAYLKKWKCAGYLDGASQKQTRLCLVLTSDAFKQLGCDLVAAKPGEVLQPVPFVPRHHRFHEYLYKMLEETRIIDVDEGIITRTALPLPTQSSQAILDDLMSHHPDDGPSHQLTYNIGSRMADVLSGKADGPQLIFGDAKNRELVAAFYGELPFNKLYFQLMADFLSRIAESLRLCAQNRGPLKILEMGAGTGGTTKVLVPALAKLGIPVEYTFTDLSPSLVAQAKKKFKQYPFMKFAVHDIEQPPSDPLLIGSQNIVIASNAVHATHSLQVSTQNIRKFLRPDGFLMLLEMNSTLHWVDVVWGTLEGWWLFEDGRTHAVVDERQWEKELLDAGYKHVEWTDGKLPEVRVQRVRIALADDVEQNVGRLPPVAKQQVDDHDLSEEELNEKKQVADDYVKETIRGFTIPAYSGDLTDSSEYGKAVLVTGTTGSLGSHIIAHLVSLPSVDRVYCLNRPAIGGARAKDATPRDPLHRQLQSLESKSIALDASQLAKLKVIETDSSKAQLGLDTEEYKHLLCHVTHIIHNAFPVNGLRSLKQNEAQFTIMRNLVDLAAEISARRKATDFKFAFQFISSLSAVGKYPSVHAGEIQVPEEHLNIDSALPNGYGGAKVICERILHETLGQYPERFRAMTVRLGQLSGSMETGYWNHMEVLGFLFKSAQTLRSFPAVEGILTWLPLEQASATLADLLLRDAPDCHPVYHVDNPVRKPWAEIVPVLAQALGIPEKGIVPLDDWLRRVKAFPGEDPWDNPAGKAIDFFEHKFQHMSCGGVTMATNNAVEHSPTLRGVQPVADAVVMKYFQVWKDTGFLR.

A disordered region spans residues Lys-21 to Thr-45. A compositionally biased stretch (polar residues) spans Ala-36–Thr-45. The segment at Ala-112–Leu-281 is N-terminal acylcarrier protein transacylase domain (SAT). Cys-184 functions as the Nucleophile; for transacylase activity in the catalytic mechanism. The active-site Proton donor/acceptor; for transacylase activity is His-302. Residues Asp-428 to Gln-849 enclose the Ketosynthase family 3 (KS3) domain. Catalysis depends on for beta-ketoacyl synthase activity residues Cys-596, His-731, and His-772. Positions Cys-961–Val-1276 are malonyl-CoA:ACP transacylase (MAT) domain. An N-terminal hotdog fold region spans residues Pro-1345–Asp-1477. The PKS/mFAS DH domain occupies Pro-1345–Phe-1663. The product template (PT) domain stretch occupies residues Val-1376–Lys-1548. The C-terminal hotdog fold stretch occupies residues Asp-1507–Phe-1663. The Carrier domain occupies Thr-1711–Leu-1785. At Ser-1745 the chain carries O-(pantetheine 4'-phosphoryl)serine. The segment at Gly-1789–Pro-1820 is disordered. The segment covering Ser-1794 to Ser-1803 has biased composition (low complexity). Positions Phe-2015–Thr-2197 are methyltransferase domain. The interval Val-2281 to Gly-2526 is NADPH-binding (R) domain.

It depends on pantetheine 4'-phosphate as a cofactor.

It participates in secondary metabolite biosynthesis. Functionally, non-reducing polyketide synthase; part of the gene cluster that mediates the biosynthesis of sorbicillinoids, a diverse group of yellow secondary metabolites that restrict growth of competing pathogenic fungi but not of bacteria. Sorbicillinoids biosynthesis requires the action of two PKSs. SorA iteratively combines three acetyl units and the growing chain is modified by the ketoacyl reductase subunit, and optional by the enoyl reductase subunit in the second cycle. The polyketide is then handed over to the PKS SorB, which adds three more acetyl units, and two methyl groups. SorB releases an aldehyde, which undergoes spontaneous cyclization resulting in the formation of sorbicillin or 2',3'-dihydrosorbicillin. The monooxygenase sorC oxidizes sorbicillin and 2',3'-dihydrosorbicillin to 2',3'-dihydrosorbicillinol and sorbicillinol, respectively. The oxidoreductase sorD further converts sorbicillinol into oxosorbicillinol. Sorbicillinol is the building block for the other sorbicillinoids such as disorbicillinol, bisvertinolon, and dihydrobisvertinolone. In Penicillium rubens (strain ATCC 28089 / DSM 1075 / NRRL 1951 / Wisconsin 54-1255) (Penicillium chrysogenum), this protein is Non-reducing polyketide synthase sorB.